A 449-amino-acid polypeptide reads, in one-letter code: Gamma-glutamyl phosphate reductase (449 aa).

The protein belongs to the gamma-glutamyl phosphate reductase family.

It is found in the cytoplasm. The catalysed reaction is L-glutamate 5-semialdehyde + phosphate + NADP(+) = L-glutamyl 5-phosphate + NADPH + H(+). The protein operates within amino-acid biosynthesis; L-proline biosynthesis; L-glutamate 5-semialdehyde from L-glutamate: step 2/2. In terms of biological role, catalyzes the NADPH-dependent reduction of L-glutamate 5-phosphate into L-glutamate 5-semialdehyde and phosphate. The product spontaneously undergoes cyclization to form 1-pyrroline-5-carboxylate. The polypeptide is Gamma-glutamyl phosphate reductase (Methanococcoides burtonii (strain DSM 6242 / NBRC 107633 / OCM 468 / ACE-M)).